A 317-amino-acid chain; its full sequence is Bile salt hydrolase/transferase (317 aa).

Cysteine 2 serves as the catalytic Nucleophile; acyl-thioester intermediate. Deoxycholate contacts are provided by cysteine 2 and arginine 18. Asparagine 82 contacts taurine.

It belongs to the peptidase C59 family. Homotetramer. The tetramer consists of a dimer of dimers.

It carries out the reaction glycocholate + H2O = cholate + glycine. It catalyses the reaction glycodeoxycholate + H2O = deoxycholate + glycine. The catalysed reaction is chenodeoxycholate + glycine = glycochenodeoxycholate + H2O. The enzyme catalyses cholate + taurine = taurocholate + H2O. It carries out the reaction taurodeoxycholate + H2O = deoxycholate + taurine. It catalyses the reaction taurochenodeoxycholate + H2O = chenodeoxycholate + taurine. The catalysed reaction is an L-alpha-amino acid + cholate = an N-choloyl-L-alpha-amino acid + H2O. The enzyme catalyses an L-alpha-amino acid + taurocholate = an N-choloyl-L-alpha-amino acid + taurine. It carries out the reaction cholate + L-alanine = L-alanocholate + H2O. It catalyses the reaction taurocholate + L-alanine = L-alanocholate + taurine. The catalysed reaction is cholate + L-serine = L-serocholate + H2O. The enzyme catalyses taurocholate + L-serine = L-serocholate + taurine. It carries out the reaction cholate + L-histidine = L-histidocholate + H2O. It catalyses the reaction taurocholate + L-histidine = L-histidocholate + taurine. It functions in the pathway lipid metabolism; bile acid biosynthesis. Its function is as follows. Possesses dual functions in bile acid metabolism. Acts as a bile salt hydrolase that catalyzes the deconjugation of glycine- and taurine-linked bile salts, which occurs naturally in the intestines of humans, releasing amino acid residues and deconjugated bile salts (bile acids). Can hydrolyze the amide bond in all six major human conjugated bile salts, namely glycocholate (GCA), glycodeoxycholate (GDCA), glycochenodeoxycholate (GCDCA), taurocholate (TCA), taurodeoxycholate (TDCA) and taurochenodeoxycholate (TCDCA). Shows a slight preference for glycine-conjugated bile acids as substrates. Also acts as an amine N-acyltransferase that conjugates a wide variety of amino acids to conjugated and non-conjugated bile acids, thus producing bacterial bile acid amidates (BBAAs) - also named microbially conjugated bile acids (MCBAs) - in the gastrointestinal tract. These BBAAs may facilitate communication between the microbiota and host through the activation of human ligand-activated transcription factors. The chain is Bile salt hydrolase/transferase from Bifidobacterium longum subsp. longum (strain ATCC 15707 / DSM 20219 / JCM 1217 / NCTC 11818 / E194b).